Consider the following 379-residue polypeptide: Ribosomal RNA small subunit methyltransferase H (379 aa).

S-adenosyl-L-methionine is bound by residues 71–73, E90, D157, and H164; that span reads GGH.

It belongs to the methyltransferase superfamily. RsmH family.

It is found in the cytoplasm. It catalyses the reaction cytidine(1402) in 16S rRNA + S-adenosyl-L-methionine = N(4)-methylcytidine(1402) in 16S rRNA + S-adenosyl-L-homocysteine + H(+). Its function is as follows. Specifically methylates the N4 position of cytidine in position 1402 (C1402) of 16S rRNA. This chain is Ribosomal RNA small subunit methyltransferase H, found in Treponema pallidum (strain Nichols).